The chain runs to 224 residues: Probable GTP-binding protein EngB (224 aa).

Positions 31–204 constitute an EngB-type G domain; it reads VGVEIAFAGR…LGILDQWCKP (174 aa). GTP-binding positions include 39-46, 65-69, 83-86, 150-153, and 183-185; these read GRSNAGKS, GRTQL, DLPG, TKAD, and FSS. Residues Ser46 and Thr67 each contribute to the Mg(2+) site.

The protein belongs to the TRAFAC class TrmE-Era-EngA-EngB-Septin-like GTPase superfamily. EngB GTPase family. Mg(2+) serves as cofactor.

Functionally, necessary for normal cell division and for the maintenance of normal septation. This is Probable GTP-binding protein EngB from Shewanella piezotolerans (strain WP3 / JCM 13877).